We begin with the raw amino-acid sequence, 455 residues long: Ribulose bisphosphate carboxylase large chain (455 aa).

Lys5 is subject to N6,N6,N6-trimethyllysine. Substrate is bound by residues Asn114 and Thr164. Residue Lys166 is the Proton acceptor of the active site. Lys168 is a binding site for substrate. Positions 192, 194, and 195 each coordinate Mg(2+). Residue Lys192 is modified to N6-carboxylysine. The active-site Proton acceptor is His285. Substrate contacts are provided by Arg286, His318, and Ser370.

The protein belongs to the RuBisCO large chain family. Type I subfamily. In terms of assembly, heterohexadecamer of 8 large chains and 8 small chains; disulfide-linked. The disulfide link is formed within the large subunit homodimers. It depends on Mg(2+) as a cofactor. In terms of processing, the disulfide bond which can form in the large chain dimeric partners within the hexadecamer appears to be associated with oxidative stress and protein turnover.

The protein resides in the plastid. Its subcellular location is the chloroplast. It carries out the reaction 2 (2R)-3-phosphoglycerate + 2 H(+) = D-ribulose 1,5-bisphosphate + CO2 + H2O. The catalysed reaction is D-ribulose 1,5-bisphosphate + O2 = 2-phosphoglycolate + (2R)-3-phosphoglycerate + 2 H(+). RuBisCO catalyzes two reactions: the carboxylation of D-ribulose 1,5-bisphosphate, the primary event in carbon dioxide fixation, as well as the oxidative fragmentation of the pentose substrate in the photorespiration process. Both reactions occur simultaneously and in competition at the same active site. The polypeptide is Ribulose bisphosphate carboxylase large chain (Lupinus latifolius (Broad-leaved lupine)).